The sequence spans 98 residues: NADH-ubiquinone oxidoreductase chain 4L (98 aa).

The next 3 membrane-spanning stretches (helical) occupy residues 1–21 (MSIV…GMLI), 29–49 (SLLC…LIIL), and 61–81 (IILL…LVMV).

Belongs to the complex I subunit 4L family. As to quaternary structure, core subunit of respiratory chain NADH dehydrogenase (Complex I) which is composed of 45 different subunits.

The protein resides in the mitochondrion inner membrane. The catalysed reaction is a ubiquinone + NADH + 5 H(+)(in) = a ubiquinol + NAD(+) + 4 H(+)(out). Core subunit of the mitochondrial membrane respiratory chain NADH dehydrogenase (Complex I) which catalyzes electron transfer from NADH through the respiratory chain, using ubiquinone as an electron acceptor. Part of the enzyme membrane arm which is embedded in the lipid bilayer and involved in proton translocation. The sequence is that of NADH-ubiquinone oxidoreductase chain 4L (MT-ND4L) from Herpestes javanicus (Small Indian mongoose).